A 207-amino-acid chain; its full sequence is Large ribosomal subunit protein uL4 (207 aa).

Residues 44–76 are disordered; that stretch reads KRRGTASAKTRSEVRGGGRKPWRQKGTGRARHG. Residues 60–76 show a composition bias toward basic residues; that stretch reads GGRKPWRQKGTGRARHG.

The protein belongs to the universal ribosomal protein uL4 family. As to quaternary structure, part of the 50S ribosomal subunit.

In terms of biological role, one of the primary rRNA binding proteins, this protein initially binds near the 5'-end of the 23S rRNA. It is important during the early stages of 50S assembly. It makes multiple contacts with different domains of the 23S rRNA in the assembled 50S subunit and ribosome. Functionally, forms part of the polypeptide exit tunnel. In Natranaerobius thermophilus (strain ATCC BAA-1301 / DSM 18059 / JW/NM-WN-LF), this protein is Large ribosomal subunit protein uL4.